A 614-amino-acid polypeptide reads, in one-letter code: MSSKFDVVICGSGTAGLAAATWLAQYGVDCKILESRSGPLDVGQADGIQVRSVEIFESFGMAEELLREAYHNIEVAFWGSNPTSSGMGIVRKRSAHATTPGLSHMPRVILNQARFNEMWLEAMRRRNGQEVDYGHKVTKVTVDEEKATDPDAYPVTIVAQKDGQEQVFEAKYCLASDGAHSAVRKSLGFNMVGETSDSVWGVMDVFPRTNFPDIRKQCIIQSDAGSIITIPREGGSMVRVYVELAAGTNAKEVTLEQIQNASRQVFHPYALDVADVWWWSAYPIGQRIADHFSKANRVFLTGDACHTHSPKAGQGMNVSLQDGYNIGWKLASVLKGHAGPELLETYVLERQKVADVLINWDKVWAKQMCSIAKEDGGVVDANGKIDFSEVFVKAEAFTAGLTVTYGDSIITQAGDSNQQAATNLKVGMRLPAAQVVRFCDAKVMKTVNALPSDGRWRIMIFPGDIRQPSASTRLAQLGTYLFSNHGPIRKYLPPGADIDSLIEVIVILSGERLEIQQDQIPDAFWPTTGKYRMRDLHKIYIDDETYHNGHGHAYDFYGIDPERGAVAIVRPDQYISKVLDMKNHEGISAFFEKFLQKKGQANGSLNSHDEWTLA.

A signal peptide spans 1–23; sequence MSSKFDVVICGSGTAGLAAATWL. FAD contacts are provided by residues 6-35, Gln44, Val137, and 239-241; these read DVVI…ILES and RVY. Residue Asn260 is glycosylated (N-linked (GlcNAc...) asparagine). Positions 282 and 303 each coordinate FAD. Asn317 carries N-linked (GlcNAc...) asparagine glycosylation. Ser319 contributes to the FAD binding site. Asn602 is a glycosylation site (N-linked (GlcNAc...) asparagine).

It belongs to the PheA/TfdB FAD monooxygenase family. FAD serves as cofactor.

The protein operates within secondary metabolite biosynthesis. FAD-dependent monooxygenase; part of the gene cluster that mediates the biosynthesis of terrein, a fungal metabolite with ecological, antimicrobial, antiproliferative, and antioxidative activities. The first step in the pathway is performed by the polyketide synthase terA that produces 4-hydroxy-6-methylpyranon (4-HMP), orsellinic acid (OA), and 2,3-dehydro-6-hydroxymellein (2,3-dehydro-6-HM) by condensing acetyl-CoA with two, three, or four malonyl-CoA units, respectively. 4-HMP and OA are not pathway intermediates, but are rather shunt or side products. 2,3-dehydro-6-HM is further converted to 6-hydroxymellein (6-HM) by the 6-hydroxymellein synthase terB. The monooxygenases terC and terD, the multicopper oxidase terE and the Kelch-like protein terF are then involved in the transformation of 6-HM to terrein. Even if they are co-regulated with the other terrein cluster genes, terH and terI seem to be dispensable for terrein production; whereas one or both of the 2 transporters terG and terJ are probably required for efficient secretion of metabolites. The sequence is that of FAD-dependent monooxygenase terD from Aspergillus terreus (strain NIH 2624 / FGSC A1156).